The primary structure comprises 211 residues: Type II secretion system protein J (211 aa).

Residues 1-7 (MRPRAAG) constitute a propeptide, leader sequence. Position 8 is an N-methylphenylalanine (phenylalanine 8). The helical transmembrane segment at 8–28 (FTLIEVLLATMLLVGGLALAF) threads the bilayer.

This sequence belongs to the GSP J family.

It localises to the membrane. In terms of biological role, involved in a type II secretion system (T2SS, formerly general secretion pathway, GSP) for the export of proteins. The sequence is that of Type II secretion system protein J (xpsJ) from Xanthomonas campestris pv. campestris (strain ATCC 33913 / DSM 3586 / NCPPB 528 / LMG 568 / P 25).